Here is a 308-residue protein sequence, read N- to C-terminus: uncharacterized protein (308 aa).

Residues L50, D90, N117, Y182, K186, I222, and T224 each contribute to the NADP(+) site. The active-site Proton acceptor is Y182. Catalysis depends on K186, which acts as the Lowers pKa of active site Tyr.

It belongs to the short-chain dehydrogenases/reductases (SDR) family.

This is an uncharacterized protein from Saccharomyces cerevisiae (strain ATCC 204508 / S288c) (Baker's yeast).